A 212-amino-acid chain; its full sequence is Pyridoxine/pyridoxamine 5'-phosphate oxidase (212 aa).

Substrate is bound by residues 9–12 (RKSY) and Lys67. FMN is bound by residues 62–67 (RIVLIK), 77–78 (FT), Arg83, and Lys84. Substrate-binding residues include Tyr124, Arg128, and Ser132. Residues 141–142 (QS) and Trp185 each bind FMN. 191–193 (RLH) provides a ligand contact to substrate. FMN is bound at residue Arg195.

Belongs to the pyridoxamine 5'-phosphate oxidase family. Homodimer. FMN serves as cofactor.

The enzyme catalyses pyridoxamine 5'-phosphate + O2 + H2O = pyridoxal 5'-phosphate + H2O2 + NH4(+). The catalysed reaction is pyridoxine 5'-phosphate + O2 = pyridoxal 5'-phosphate + H2O2. Its pathway is cofactor metabolism; pyridoxal 5'-phosphate salvage; pyridoxal 5'-phosphate from pyridoxamine 5'-phosphate: step 1/1. It functions in the pathway cofactor metabolism; pyridoxal 5'-phosphate salvage; pyridoxal 5'-phosphate from pyridoxine 5'-phosphate: step 1/1. In terms of biological role, catalyzes the oxidation of either pyridoxine 5'-phosphate (PNP) or pyridoxamine 5'-phosphate (PMP) into pyridoxal 5'-phosphate (PLP). This is Pyridoxine/pyridoxamine 5'-phosphate oxidase from Verminephrobacter eiseniae (strain EF01-2).